We begin with the raw amino-acid sequence, 123 residues long: Large ribosomal subunit protein bL12 (123 aa).

The protein belongs to the bacterial ribosomal protein bL12 family. As to quaternary structure, homodimer. Part of the ribosomal stalk of the 50S ribosomal subunit. Forms a multimeric L10(L12)X complex, where L10 forms an elongated spine to which 2 to 4 L12 dimers bind in a sequential fashion. Binds GTP-bound translation factors.

Functionally, forms part of the ribosomal stalk which helps the ribosome interact with GTP-bound translation factors. Is thus essential for accurate translation. In Bartonella henselae (strain ATCC 49882 / DSM 28221 / CCUG 30454 / Houston 1) (Rochalimaea henselae), this protein is Large ribosomal subunit protein bL12.